The sequence spans 86 residues: U15-lycotoxin-Ls1c (86 aa).

An N-terminal signal peptide occupies residues 1–20 (MNSKIFAVLLLLAFLSCVLS). The region spanning 21-66 (DQYCPKSSITACKKMNIRNDCCKDDDCTGGSWCCATPCGNICKYPT) is the WAP domain. Disulfide bonds link Cys-24/Cys-54, Cys-32/Cys-58, Cys-41/Cys-53, Cys-42/Cys-80, and Cys-47/Cys-62.

It belongs to the venom protein 11 family. 01 (wap-1) subfamily. In terms of processing, contains 5 disulfide bonds. In terms of tissue distribution, expressed by the venom gland.

It localises to the secreted. Functionally, has antibacterial activity. The chain is U15-lycotoxin-Ls1c from Lycosa singoriensis (Wolf spider).